The primary structure comprises 130 residues: Holin-like protein CidA (130 aa).

The next 4 membrane-spanning stretches (helical) occupy residues 6–26 (FVIK…IGTE), 31–51 (LHIP…LLQF), 65–85 (FLLK…MDVA), and 93–113 (ILFF…SGYI).

Belongs to the CidA/LrgA family. CidA subfamily.

The protein localises to the cell membrane. In terms of biological role, increases the activity of extracellular murein hydrolases possibly by mediating their export via hole formation. Inhibited by the antiholin-like proteins LrgAB. In an unstressed cell, the LrgAB products probably inhibit the function of the CidAB proteins. When a cell is stressed by the addition of antibiotics or by other factors in the environment, the CidAB proteins possibly oligomerize within the bacterial cell membrane, creating lesions that disrupt the proton motive force, which in turn results in loss of cell viability. These lesions are also hypothesized to regulate the subsequent cell lysis by either allowing the murein hydrolases access to the cell wall substrate and/or regulating their activity by a possible change in the cell wall pH that results from loss of membrane potential. The polypeptide is Holin-like protein CidA (Staphylococcus epidermidis (strain ATCC 35984 / DSM 28319 / BCRC 17069 / CCUG 31568 / BM 3577 / RP62A)).